Consider the following 331-residue polypeptide: Beta-ketoacyl-[acyl-carrier-protein] synthase III (331 aa).

Residues cysteine 113 and histidine 253 contribute to the active site. An ACP-binding region spans residues 254 to 258; that stretch reads QANTR. Residue asparagine 283 is part of the active site.

This sequence belongs to the thiolase-like superfamily. FabH family. Homodimer.

Its subcellular location is the cytoplasm. It catalyses the reaction malonyl-[ACP] + acetyl-CoA + H(+) = 3-oxobutanoyl-[ACP] + CO2 + CoA. Its pathway is lipid metabolism; fatty acid biosynthesis. Its function is as follows. Catalyzes the condensation reaction of fatty acid synthesis by the addition to an acyl acceptor of two carbons from malonyl-ACP. Catalyzes the first condensation reaction which initiates fatty acid synthesis and may therefore play a role in governing the total rate of fatty acid production. Possesses both acetoacetyl-ACP synthase and acetyl transacylase activities. Its substrate specificity determines the biosynthesis of branched-chain and/or straight-chain of fatty acids. The chain is Beta-ketoacyl-[acyl-carrier-protein] synthase III from Desulfitobacterium hafniense (strain Y51).